Reading from the N-terminus, the 336-residue chain is Phosphatidylglycerol--prolipoprotein diacylglyceryl transferase (336 aa).

The next 3 membrane-spanning stretches (helical) occupy residues 16–36 (IGPVTIHFYALCILLGIVLAV), 53–73 (ILDITLVAVPSGIIGARIYHI), and 93–113 (IWNGGLGIWGGVLLGALAAWA). Arg141 serves as a coordination point for a 1,2-diacyl-sn-glycero-3-phospho-(1'-sn-glycerol). The next 3 membrane-spanning stretches (helical) occupy residues 190–210 (PTFLYEMIWNLIGAALIVFLG), 220–240 (GSLFAIYIMWYTVGRTWIEAL), and 253–273 (INVWVSMAVFVLGVVAFIVIQ).

It belongs to the Lgt family.

It localises to the cell membrane. It carries out the reaction L-cysteinyl-[prolipoprotein] + a 1,2-diacyl-sn-glycero-3-phospho-(1'-sn-glycerol) = an S-1,2-diacyl-sn-glyceryl-L-cysteinyl-[prolipoprotein] + sn-glycerol 1-phosphate + H(+). Its pathway is protein modification; lipoprotein biosynthesis (diacylglyceryl transfer). Functionally, catalyzes the transfer of the diacylglyceryl group from phosphatidylglycerol to the sulfhydryl group of the N-terminal cysteine of a prolipoprotein, the first step in the formation of mature lipoproteins. The sequence is that of Phosphatidylglycerol--prolipoprotein diacylglyceryl transferase from Bifidobacterium adolescentis (strain ATCC 15703 / DSM 20083 / NCTC 11814 / E194a).